The following is a 110-amino-acid chain: SGPIQLWQFLLELLTDKTCQHIISWTGDGWEFKLSDPDEVARRWGKRKNKPKMNYEKLSRGLRYYYDKNIIHKTAGKRYVYRFVCDLQSLLGYSPEELHEMVGVPPRDDD.

The segment at residues 1 to 84 is a DNA-binding region (ETS); it reads SGPIQLWQFL…AGKRYVYRFV (84 aa).

It belongs to the ETS family.

The protein resides in the nucleus. Functionally, probable transcription factor. The polypeptide is Protein C-ets-2 (ETS-2) (Lytechinus variegatus (Green sea urchin)).